Reading from the N-terminus, the 366-residue chain is GDSL esterase/lipase LTL1 (366 aa).

Residues 1–27 (MNINCSPLGFLISLFFIVTFLAPQVKS) form the signal peptide. Serine 36 serves as the catalytic Nucleophile. N-linked (GlcNAc...) asparagine glycosylation is present at asparagine 117. Active-site residues include aspartate 326 and histidine 329. N-linked (GlcNAc...) asparagine glycosylation is present at asparagine 354.

The protein belongs to the 'GDSL' lipolytic enzyme family. Binds to VLG at the endomembrane system. Mostly expressed in flowers, reproductive stems and rosette leaves, and, to a lower extent, in roots.

Its subcellular location is the secreted. In terms of biological role, involved in the mechanisms of salt tolerance. Mediates resistance to LiCl and NaCl. The chain is GDSL esterase/lipase LTL1 from Arabidopsis thaliana (Mouse-ear cress).